The following is a 102-amino-acid chain: Acid shock protein (102 aa).

An N-terminal signal peptide occupies residues 1-21 (MKKVLALVVAAAMGLSSAAFA). The propeptide occupies 22–58 (AETAITPAPTATTTKAAPAKTTHHKKQHKAAPAQKAQ). Residues 26-41 (ITPAPTATTTKAAPAK) show a composition bias toward low complexity. The segment at 26–102 (ITPAPTATTT…PAKPAAQPAA (77 aa)) is disordered. Residues 80–90 (AAKKHAKKHSH) are compositionally biased toward basic residues. Over residues 91–102 (QQPAKPAAQPAA) the composition is skewed to low complexity.

The protein belongs to the Asr family. Proteolytic processing gives rise to the active protein.

It is found in the periplasm. Its function is as follows. Required for growth and/or survival at acidic conditions. The sequence is that of Acid shock protein from Escherichia coli O81 (strain ED1a).